The sequence spans 427 residues: 3-phosphoshikimate 1-carboxyvinyltransferase (427 aa).

Positions 22, 23, and 27 each coordinate 3-phosphoshikimate. Phosphoenolpyruvate is bound at residue K22. Phosphoenolpyruvate-binding residues include G96 and R124. Positions 169, 170, 171, 197, 313, 336, and 340 each coordinate 3-phosphoshikimate. Q171 contacts phosphoenolpyruvate. D313 acts as the Proton acceptor in catalysis. Residues R344, R386, and K411 each contribute to the phosphoenolpyruvate site.

The protein belongs to the EPSP synthase family. Monomer.

The protein resides in the cytoplasm. The catalysed reaction is 3-phosphoshikimate + phosphoenolpyruvate = 5-O-(1-carboxyvinyl)-3-phosphoshikimate + phosphate. The protein operates within metabolic intermediate biosynthesis; chorismate biosynthesis; chorismate from D-erythrose 4-phosphate and phosphoenolpyruvate: step 6/7. Its function is as follows. Catalyzes the transfer of the enolpyruvyl moiety of phosphoenolpyruvate (PEP) to the 5-hydroxyl of shikimate-3-phosphate (S3P) to produce enolpyruvyl shikimate-3-phosphate and inorganic phosphate. The sequence is that of 3-phosphoshikimate 1-carboxyvinyltransferase from Salmonella heidelberg (strain SL476).